The primary structure comprises 155 residues: Interleukin-2 (155 aa).

The first 20 residues, 1-20 (MYKIQLLSCIALTLALVANG), serve as a signal peptide directing secretion. Thr-23 is a glycosylation site (O-linked (GalNAc...) threonine). Cys-79 and Cys-127 form a disulfide bridge.

Belongs to the IL-2 family.

It is found in the secreted. In terms of biological role, cytokine produced by activated CD4-positive helper T-cells and to a lesser extend activated CD8-positive T-cells and natural killer (NK) cells that plays pivotal roles in the immune response and tolerance. Binds to a receptor complex composed of either the high-affinity trimeric IL-2R (IL2RA/CD25, IL2RB/CD122 and IL2RG/CD132) or the low-affinity dimeric IL-2R (IL2RB and IL2RG). Interaction with the receptor leads to oligomerization and conformation changes in the IL-2R subunits resulting in downstream signaling starting with phosphorylation of JAK1 and JAK3. In turn, JAK1 and JAK3 phosphorylate the receptor to form a docking site leading to the phosphorylation of several substrates including STAT5. This process leads to activation of several pathways including STAT, phosphoinositide-3-kinase/PI3K and mitogen-activated protein kinase/MAPK pathways. Functions as a T-cell growth factor and can increase NK-cell cytolytic activity as well. Promotes strong proliferation of activated B-cells and subsequently immunoglobulin production. Plays a pivotal role in regulating the adaptive immune system by controlling the survival and proliferation of regulatory T-cells, which are required for the maintenance of immune tolerance. Moreover, participates in the differentiation and homeostasis of effector T-cell subsets, including Th1, Th2, Th17 as well as memory CD8-positive T-cells. This chain is Interleukin-2 (IL2), found in Bos taurus (Bovine).